The following is a 222-amino-acid chain: Ras-related protein RabT1 (222 aa).

Residue 37 to 44 (GDNKTGKS) coordinates GTP. Positions 59–66 (VSSIGVDF) match the Effector region motif. GTP contacts are provided by residues 85-89 (DVNSC) and 145-148 (NKCD). Cys-219 is subject to Cysteine methyl ester. Residue Cys-219 is the site of S-geranylgeranyl cysteine attachment. The propeptide at 220–222 (NIL) is removed in mature form.

This sequence belongs to the small GTPase superfamily. Rab family.

It is found in the cell membrane. This Dictyostelium discoideum (Social amoeba) protein is Ras-related protein RabT1 (rabT1).